Consider the following 122-residue polypeptide: UPF0102 protein CPE1705 (122 aa).

This sequence belongs to the UPF0102 family.

The polypeptide is UPF0102 protein CPE1705 (Clostridium perfringens (strain 13 / Type A)).